The sequence spans 1581 residues: Mediator of RNA polymerase II transcription subunit 1 (1581 aa).

The segment at 1 to 670 (MKAQGETEES…YGSSPLERQN (670 aa)) is interaction with the Mediator complex and THRA. Residues 16–590 (MSSLLERLHA…SIKDRHESVG (575 aa)) are interaction with ESR1. Interaction with the Mediator complex regions lie at residues 108-212 (FYVE…GYLT) and 215-390 (SGGH…SLQG). Residues 405 to 644 (PLILNLIRHQ…MAGNTKNHPM (240 aa)) are interaction with THRA. The interval 542 to 788 (PASSPGYGMT…TDILSDIAEE (247 aa)) is interaction with VDR. S588 carries the phosphoserine modification. The LXXLL motif 1 motif lies at 604-608 (LTSLL). 4 disordered regions span residues 609–705 (QITG…HQTE), 791–819 (KLPS…QSTL), 868–895 (LSNS…DDFK), and 947–1566 (EHHS…DFMI). Positions 622–632 (PTPPHHTPPPV) are enriched in pro residues. The interaction with PPARGC1A and THRA stretch occupies residues 622–701 (PTPPHHTPPP…SSRLPPEKPK (80 aa)). Positions 645–649 (LMNLL) match the LXXLL motif 2 motif. Residues 655–675 (QDFSTLYGSSPLERQNSSSGS) are compositionally biased toward polar residues. The tract at residues 656–1065 (DFSTLYGSSP…TPPIPKITIQ (410 aa)) is interaction with ESR1. S664 is subject to Phosphoserine. Residues 681-715 (CSGSNKTKKKESSRLPPEKPKHQTEDDFQRELFSM) are interaction with GATA1. The span at 690–705 (KESSRLPPEKPKHQTE) shows a compositional bias: basic and acidic residues. A Phosphoserine modification is found at S794. T804 carries the phosphothreonine modification. Over residues 807–819 (RDSSSSGHSQSTL) the composition is skewed to polar residues. The Integrase domain-binding motif (IBM) motif lies at 874 to 901 (QSGFGEEYFDESSQSGDNDDFKGFASQA). 2 positions are modified to phosphoserine: S886 and S952. The span at 962-973 (LGKEKTQKRVKE) shows a compositional bias: basic and acidic residues. The residue at position 1031 (T1031) is a Phosphothreonine; by MAPK1 or MAPK3. Residues 1033-1050 (PTSTGGSKSPGSSGRSQT) are compositionally biased toward low complexity. T1050 and T1056 each carry phosphothreonine. Composition is skewed to low complexity over residues 1077–1093 (SSHS…SSGS), 1100–1111 (SSSSSSSSASTS), and 1119–1156 (SEGS…PGSS). S1156 carries the post-translational modification Phosphoserine. Over residues 1162-1195 (GLSSGSSSTKMKPQGKPSSLMNPSLSKPNISPSH) the composition is skewed to polar residues. K1177 carries the N6-acetyllysine modification. Residue S1207 is modified to Phosphoserine. A Phosphothreonine modification is found at T1215. Composition is skewed to low complexity over residues 1218–1227 (SSKAKSPISS) and 1234–1293 (MSGT…SKGK). S1223 bears the Phosphoserine mark. Residues 1249–1421 (LGSSGSLSQK…KPGESSGEGL (173 aa)) form an interaction with TP53 region. S1302 is subject to Phosphoserine. The span at 1330-1345 (GVSTNSSSHPMSSKHN) shows a compositional bias: polar residues. S1347 bears the Phosphoserine mark. Residues 1352–1364 (QGKREKSDKDKSK) show a composition bias toward basic and acidic residues. Phosphoserine occurs at positions 1403 and 1433. 2 stretches are compositionally biased toward polar residues: residues 1425 to 1440 (MASS…SGST) and 1448 to 1482 (PSHS…SPSS). T1440 carries the phosphothreonine modification. T1457 is subject to Phosphothreonine; by MAPK1 or MAPK3. 5 positions are modified to phosphoserine: S1463, S1465, S1479, S1481, and S1482. Over residues 1496–1505 (KHKKHKKEKK) the composition is skewed to basic residues. A compositionally biased stretch (basic and acidic residues) spans 1506-1522 (KVKDKDRDRDRDKDRDK). K1529 is subject to N6-acetyllysine. Residues 1533–1552 (WSKSPISSDQSLSMTSNTIL) are compositionally biased toward polar residues.

The protein belongs to the Mediator complex subunit 1 family. Component of the Mediator complex, which is composed of MED1, MED4, MED6, MED7, MED8, MED9, MED10, MED11, MED12, MED13, MED13L, MED14, MED15, MED16, MED17, MED18, MED19, MED20, MED21, MED22, MED23, MED24, MED25, MED26, MED27, MED29, MED30, MED31, CCNC, CDK8 and CDC2L6/CDK11. The MED12, MED13, CCNC and CDK8 subunits form a distinct module termed the CDK8 module. Mediator containing the CDK8 module is less active than Mediator lacking this module in supporting transcriptional activation. Individual preparations of the Mediator complex lacking one or more distinct subunits have been variously termed ARC, CRSP, DRIP, PC2, SMCC and TRAP. This subunit specifically interacts with a number of nuclear receptors in a ligand-dependent fashion including AR, ESR1, ESR2, PPARA, PPARG, RORA, RXRA, RXRG, THRA, THRB and VDR. Interacts with CTNNB1, GABPA, GLI3, PPARGC1A and TP53. Interacts with GATA1 and YWHAH. Interacts with CLOCK; this interaction requires the presence of THRAP3. Interacts with CCAR1. Interacts with NR4A3. Interacts (via IBM motif) with PSIP1 (via IBD domain); phosphorylation increases its affinity for PSIP1. Interacts with USP22. In terms of processing, phosphorylated by MAPK1 or MAPK3 during G2/M phase which may enhance protein stability and promote entry into the nucleolus. Phosphorylation increases its interaction with PSIP1.

The protein localises to the nucleus. Component of the Mediator complex, a coactivator involved in the regulated transcription of nearly all RNA polymerase II-dependent genes. Mediator functions as a bridge to convey information from gene-specific regulatory proteins to the basal RNA polymerase II transcription machinery. Mediator is recruited to promoters by direct interactions with regulatory proteins and serves as a scaffold for the assembly of a functional preinitiation complex with RNA polymerase II and the general transcription factors. Acts as a coactivator for GATA1-mediated transcriptional activation during erythroid differentiation of K562 erythroleukemia cells. The polypeptide is Mediator of RNA polymerase II transcription subunit 1 (MED1) (Pongo abelii (Sumatran orangutan)).